Reading from the N-terminus, the 185-residue chain is Ribosome-recycling factor (185 aa).

It belongs to the RRF family.

It is found in the cytoplasm. In terms of biological role, responsible for the release of ribosomes from messenger RNA at the termination of protein biosynthesis. May increase the efficiency of translation by recycling ribosomes from one round of translation to another. The chain is Ribosome-recycling factor from Aeromonas salmonicida (strain A449).